The sequence spans 379 residues: MSVRLADVIDVLDQAYPPRLAQSWDSVGLVCGDPDDVVDSVTVAVDATPAVVDQVPQAGLLLVHHPLLLRGVDTVAANTPKGVLVHRLIRTGRSLFTAHTNADSASPGVSDALAHAVGLTVDAVLDPVPGAADLDKWVIYVPRENSEAVRAAVFEAGAGHIGDYSHCSWSVAGTGQFLAHDGASPAIGSVGTVERVAEDRVEVVAPARARAEVLAAMRAAHPYEEPAFDIFALVPPPVGSGLGRIGRLPKPEPLRTFVARLEAALPPTATGVRAAGDPDLLVSRVAVCGGAGDSLLATVAAADVQAYVTADLRHHPADEHCRASQVALIDVAHWASEFPWCGQAAEVLRSHFGASLPVRVCTICTDPWNLDHETGRDQA.

5 residues coordinate a divalent metal cation: H64, H65, D103, H333, and E337.

It belongs to the GTP cyclohydrolase I type 2/NIF3 family. In terms of assembly, homohexamer.

The chain is GTP cyclohydrolase 1 type 2 homolog from Mycobacterium bovis (strain ATCC BAA-935 / AF2122/97).